The sequence spans 478 residues: Cysteine protease ATG4B (478 aa).

Positions 1 to 15 (MTSLPDRGVSSSSSD) are enriched in polar residues. Residues 1–31 (MTSLPDRGVSSSSSDPLCEGNIAPCSSSSEQ) are disordered. Catalysis depends on C164, which acts as the Nucleophile. Catalysis depends on residues D361 and H363.

Belongs to the peptidase C54 family. As to quaternary structure, interacts with ATG8.

Its subcellular location is the cytoplasm. The catalysed reaction is [protein]-C-terminal L-amino acid-glycyl-phosphatidylethanolamide + H2O = [protein]-C-terminal L-amino acid-glycine + a 1,2-diacyl-sn-glycero-3-phosphoethanolamine. Cysteine protease that plays a key role in autophagy by mediating both proteolytic activation and delipidation of ATG8 family proteins. The protease activity is required for proteolytic activation of ATG8 family proteins: cleaves the C-terminal amino acid of ATG8 proteins to reveal a C-terminal glycine. Exposure of the glycine at the C-terminus is essential for ATG8 proteins conjugation to phosphatidylethanolamine (PE) and insertion to membranes, which is necessary for autophagy. In addition to the protease activity, also mediates delipidation of PE-conjugated ATG8 proteins. The chain is Cysteine protease ATG4B (ATG4B) from Oryza sativa subsp. japonica (Rice).